We begin with the raw amino-acid sequence, 502 residues long: Beta-glucosidase 7 (502 aa).

Residues 1-22 (MKPFSQFFVFVVTVSATSYIDA) form the signal peptide. A beta-D-glucoside contacts are provided by residues Gln42, His140, and 185-186 (NE). Glu186 acts as the Proton donor in catalysis. An N-linked (GlcNAc...) asparagine glycan is attached at Asn208. A beta-D-glucoside is bound at residue Tyr325. Asn359 is a glycosylation site (N-linked (GlcNAc...) asparagine). Glu392 is a binding site for a beta-D-glucoside. Glu392 functions as the Nucleophile in the catalytic mechanism. A glycan (N-linked (GlcNAc...) asparagine) is linked at Asn425. A beta-D-glucoside contacts are provided by Trp435 and Tyr451. N-linked (GlcNAc...) asparagine glycosylation is found at Asn457 and Asn479.

Belongs to the glycosyl hydrolase 1 family.

It catalyses the reaction Hydrolysis of terminal, non-reducing beta-D-glucosyl residues with release of beta-D-glucose.. The sequence is that of Beta-glucosidase 7 from Arabidopsis thaliana (Mouse-ear cress).